We begin with the raw amino-acid sequence, 160 residues long: uncharacterized protein (160 aa).

Positions 69-145 form a coiled coil; it reads NQLLNMMAQA…EQREHVKEQR (77 aa). Disordered stretches follow at residues 82 to 109 and 129 to 160; these read GVRLQGRRQKKINPKRLQRQVSKELKNA and KKKQIMKEQREHVKEQRYMLKKQKAKKKHRGK. The span at 86–99 shows a compositional bias: basic residues; it reads QGRRQKKINPKRLQ. Residues 133-146 show a composition bias toward basic and acidic residues; it reads IMKEQREHVKEQRY. The span at 147–160 shows a compositional bias: basic residues; that stretch reads MLKKQKAKKKHRGK.

This is an uncharacterized protein from Bacillus subtilis (strain 168).